The primary structure comprises 181 residues: Malignant T-cell-amplified sequence 2 (181 aa).

The PUA domain occupies 92 to 171 (LPHQQVDKGA…IGIENIHYLN (80 aa)).

It belongs to the MCTS1 family.

The protein resides in the cytoplasm. This is Malignant T-cell-amplified sequence 2 from Homo sapiens (Human).